Here is a 48-residue protein sequence, read N- to C-terminus: Large ribosomal subunit protein bL33B (48 aa).

This sequence belongs to the bacterial ribosomal protein bL33 family.

The chain is Large ribosomal subunit protein bL33B (rpmG2) from Mycoplasma genitalium (strain ATCC 33530 / DSM 19775 / NCTC 10195 / G37) (Mycoplasmoides genitalium).